The chain runs to 598 residues: Arylsulfate sulfotransferase AssT (598 aa).

The signal sequence occupies residues 1-27 (MFHPYRKTLLSGTVALALGLFATGAIA). 2 residues coordinate 4-methylumbelliferone: histidine 279 and histidine 383. The cysteines at positions 445 and 451 are disulfide-linked. 4-methylumbelliferone is bound at residue histidine 463. Histidine 463 serves as the catalytic Nucleophile; sulfurylated histidine covalent intermediate.

The protein belongs to the aryl sulfotransferase family. Monomer.

It is found in the periplasm. It carries out the reaction an aryl sulfate + a phenol = an aryl sulfate + a phenol. The enzyme catalyses 4-methylumbelliferone sulfate + phenol = phenyl sulfate + 4-methylumbelliferone. It catalyses the reaction 2-naphthyl sulfate + phenol = phenyl sulfate + 2-naphthol. Its function is as follows. Catalyzes the transfer of a sulfate group from a phenyl sulfate ester to other phenolic compounds. Is able to use several substrate donors and acceptors in vitro: using phenol as an acceptor substrate, 4-methylumbelliferyl sulfate is the best donor substrate, followed by beta-naphthyl sulfate, p-nitrophenyl sulfate (PNS), and alpha-naphthyl sulfate; using PNS as a donor substrate, alpha-naphthol is the best acceptor substrate, followed by phenol, resorcinol, p-acetaminophen, tyramine, and tyrosine. Cannot use 3'-phosphoadenosine-5'-phophosulfate (PAPS), the donor substrate of mammalian sulfotransferase. May be a detoxifying enzyme, converting toxic phenolic compounds into non-toxic materials. In Lelliottia amnigena (Enterobacter amnigenus), this protein is Arylsulfate sulfotransferase AssT.